Consider the following 1216-residue polypeptide: MPKITLKGVTVDFPFQPYKCQEEYMSKVLECLQEKVNGILESPTGTGKTLCLLCSTLAWREHLRDAVSARRIAERASGELFPDRTLASWGNAIPEGDVPACYTDIPKIIYASRTHSQLTQVISELRNTSYRPRVCVLGSREQLCIHPEVKKQESNHMQVHLCRRKVASRSCHFYNNVEEKSLEQELATPILDIEDLVRSGTKHKLCPYYLSRNLKQQADIIFMPYNYLLDAKSRRAHGIDLKGTVVIFDEAHNVEKMCEEAASFDLTPHDVASELDVIDRVLEERTKVAQQAELHPEFSADSARSGLNLEPEDLAKLKMILLRLEGAIDAVELPGDNSGVTKPGSYIFELFAEAQITFQTKGCILDSLDQLIQHLAGRAGLFTNTAGLQKLVDIIQIVFSVDSAEGDPGPMVGLASQSYKVHIHLDAGHRRTAQRSDVWNTTAARKPGKVLSYWCFSPGHSMRELVRQGVRTLILTSGTLAPMASFSLEMQIPFPVCLENPHVINQHQIWVGVIPKGPDGAQLSSAFDRRFSDECLSSLGKVLSNISRVVPHGLLVFFPSYPVMEKSLEFWRARDFTRKLEVRKPLFVEPRSKGGFSEVMEAFYARVAAPESSGAIFLAVCRGKASEGLDFADVNGRGVIVTGLPYPPRMDPRVLLKMQFLDEMKAQSGAGGQFLSGHDWYRQQASRAVNQAIGRVIRHRHDYGAVFLCDHRFAHADTRAQLPSWVRPHVKVYDSFGHVIRDVAQFFRVAQKTMPEPAPRAAAPSLGEGGGIVSVSVSPGPLPTRKAMSLDVHVPSLRQRHTGSPVTKDTEGSLCVEYEQEPVRAQRRPAGLLAALGHNEQLAEGPGDEALPVEEACGCPTLLGPREKRPAEEQRGRRRKVRLVGSSEVPAASTDTGRAKLFMVAVKQALSQASFDTFTQALRDYKSSDDLEALVARLSPLFAEDPKKHSLLQGFYQFVRPHHKQQFEEVCLQLTGQGCSSPHKHGHPQRQGAQLALDSSGRKESDPKLTVSQGATRQLDPCEQLNQGRPHLASGPFPAGDLNCSLHKGSRAPGAEKQHPSTVSAYLADVRRTLGAAGYSQLLTALTTYKQDDDFEKVVAVVAALTTEKPEDLPLLQRFGMFVRPHHKQRFRQMCVDLSGPGTQAPGPQEGGPAMPSDPVCEAPSPGPRKTQSKISSFLRCQACWRQHLQVSRKCPGCCAATRKQTLAQVFWPEPQ.

Residues 7 to 295 enclose the Helicase ATP-binding domain; it reads KGVTVDFPFQ…TKVAQQAELH (289 aa). 42–49 is a binding site for ATP; sequence SPTGTGKT. [4Fe-4S] cluster contacts are provided by Cys144, Cys162, Cys171, and Cys206. Residues 150 to 166 carry the Nuclear localization signal motif; sequence KKQESNHMQVHLCRRKV. A DEAH box motif is present at residues 249–252; the sequence is DEAH. A Nuclear localization signal motif is present at residues 874–880; that stretch reads QRGRRRK. 2 disordered regions span residues 978-1018 and 1140-1172; these read GCSS…ATRQ and GPGT…RKTQ. The short motif at 1172 to 1179 is the PIP-box element; the sequence is QSKISSFL.

It belongs to the helicase family. RAD3/XPD subfamily. In terms of assembly, interacts with TERF1. Interacts (via PIP-box) with PCNA; the interaction is direct and essential for suppressing telomere fragility. Interacts with MMS19; the interaction mediates the association of RTEL1 with the cytosolic iron-sulfur protein assembly (CIA) complex. Highly expressed in adult testis, liver and ovary.

The protein localises to the nucleus. It catalyses the reaction ATP + H2O = ADP + phosphate + H(+). A probable ATP-dependent DNA helicase implicated in telomere-length regulation, DNA repair and the maintenance of genomic stability. Acts as an anti-recombinase to counteract toxic recombination and limit crossover during meiosis. Regulates meiotic recombination and crossover homeostasis by physically dissociating strand invasion events and thereby promotes noncrossover repair by meiotic synthesis dependent strand annealing (SDSA) as well as disassembly of D loop recombination intermediates. Also disassembles T loops and prevents telomere fragility by counteracting telomeric G4-DNA structures, which together ensure the dynamics and stability of the telomere. This Bos taurus (Bovine) protein is Regulator of telomere elongation helicase 1.